A 274-amino-acid chain; its full sequence is MAIVKCKPTSAGRRHVVKVVNADLHKGKPYAPLLEKNSKNGGRNNNGRITVRHIGGGHKQHYRLVDFKRTKDGIPAKVERLEYDPNRSANIALVLYADGERRYIIAPKGLQAGDVIQSGPDAPIKAGNAMPMRNIPVGSTIHNVELTPGKGAQLARSAGAYAQLVARDGAYVTLRLRSGEMRKVLSEGRATIGEVGNAEHMLRELGKAGAARWRGVRPTVRGVVMNPVDHPHGGGEGRTSGGRHPVSPWGVPTKGYKTRSNKRTDKYIVRRRNK.

Residues V223–K274 form a disordered region.

Belongs to the universal ribosomal protein uL2 family. As to quaternary structure, part of the 50S ribosomal subunit. Forms a bridge to the 30S subunit in the 70S ribosome.

In terms of biological role, one of the primary rRNA binding proteins. Required for association of the 30S and 50S subunits to form the 70S ribosome, for tRNA binding and peptide bond formation. It has been suggested to have peptidyltransferase activity; this is somewhat controversial. Makes several contacts with the 16S rRNA in the 70S ribosome. The polypeptide is Large ribosomal subunit protein uL2 (Vibrio cholerae serotype O1 (strain M66-2)).